The primary structure comprises 369 residues: Endophilin-A (369 aa).

Positions 18–248 (TEKMGGAEGT…LQEKRSEAES (231 aa)) constitute a BAR domain. Residues 227–247 (QCADVLRGLQETLQEKRSEAE) adopt a coiled-coil conformation. The segment covering 275-294 (GTPSHISSSASPLPSPMRSP) has biased composition (low complexity). The segment at 275–296 (GTPSHISSSASPLPSPMRSPAK) is disordered. Positions 305–364 (QQQPCCQALYDFDPENPGELGFKENDIITLLNRVDDNWYEGAVNGRTGYFPQSYVQVQVP) constitute an SH3 domain.

Belongs to the endophilin family.

Its subcellular location is the cytoplasm. It is found in the membrane. Functionally, required presynaptically at the neuromuscular junction. Implicated in synaptic vesicle endocytosis. In Drosophila pseudoobscura pseudoobscura (Fruit fly), this protein is Endophilin-A.